The following is a 525-amino-acid chain: 2,3-bisphosphoglycerate-independent phosphoglycerate mutase (525 aa).

Positions 15 and 65 each coordinate Mn(2+). The active-site Phosphoserine intermediate is S65. Substrate is bound by residues H126, 156–157 (RD), R188, R194, 258–261 (RPDR), and K331. Positions 398, 402, 439, 440, and 457 each coordinate Mn(2+).

It belongs to the BPG-independent phosphoglycerate mutase family. Monomer. Requires Mn(2+) as cofactor.

The catalysed reaction is (2R)-2-phosphoglycerate = (2R)-3-phosphoglycerate. Its pathway is carbohydrate degradation; glycolysis; pyruvate from D-glyceraldehyde 3-phosphate: step 3/5. Catalyzes the interconversion of 2-phosphoglycerate and 3-phosphoglycerate. This chain is 2,3-bisphosphoglycerate-independent phosphoglycerate mutase, found in Picosynechococcus sp. (strain ATCC 27264 / PCC 7002 / PR-6) (Agmenellum quadruplicatum).